The primary structure comprises 136 residues: Small ribosomal subunit protein uS9 (136 aa).

This sequence belongs to the universal ribosomal protein uS9 family.

The sequence is that of Small ribosomal subunit protein uS9 from Borreliella burgdorferi (strain ZS7) (Borrelia burgdorferi).